We begin with the raw amino-acid sequence, 385 residues long: Beta-lactamase (385 aa).

Positions Met1 to Val20 are cleaved as a signal peptide. Ser84 acts as the Acyl-ester intermediate in catalysis. Tyr170 acts as the Proton acceptor in catalysis. Lys335–Gly337 lines the substrate pocket.

The protein belongs to the class-C beta-lactamase family.

Its subcellular location is the periplasm. It carries out the reaction a beta-lactam + H2O = a substituted beta-amino acid. In terms of biological role, this protein is a serine beta-lactamase with a substrate specificity for cephalosporins. This is Beta-lactamase from Lysobacter lactamgenus.